The primary structure comprises 203 residues: Thymidylate kinase (203 aa).

Residue 14–21 (GGEGIGKS) coordinates ATP.

Belongs to the thymidylate kinase family.

It carries out the reaction dTMP + ATP = dTDP + ADP. Its function is as follows. Phosphorylation of dTMP to form dTDP in both de novo and salvage pathways of dTTP synthesis. The chain is Thymidylate kinase from Rickettsia peacockii (strain Rustic).